The chain runs to 280 residues: 2,3,4,5-tetrahydropyridine-2,6-dicarboxylate N-succinyltransferase (280 aa).

Substrate contacts are provided by Arg-107 and Asp-144.

This sequence belongs to the transferase hexapeptide repeat family. Homotrimer.

The protein localises to the cytoplasm. The catalysed reaction is (S)-2,3,4,5-tetrahydrodipicolinate + succinyl-CoA + H2O = (S)-2-succinylamino-6-oxoheptanedioate + CoA. It functions in the pathway amino-acid biosynthesis; L-lysine biosynthesis via DAP pathway; LL-2,6-diaminopimelate from (S)-tetrahydrodipicolinate (succinylase route): step 1/3. This Paramagnetospirillum magneticum (strain ATCC 700264 / AMB-1) (Magnetospirillum magneticum) protein is 2,3,4,5-tetrahydropyridine-2,6-dicarboxylate N-succinyltransferase.